The sequence spans 278 residues: Protein saf1 (278 aa).

Disordered stretches follow at residues 1 to 43 (MLSK…RNMS), 81 to 210 (KKNI…DIEE), and 240 to 264 (QKLA…EDKD). Basic and acidic residues-rich tracts occupy residues 22 to 38 (QIKV…ERLS) and 90 to 103 (GRVE…AERQ). Composition is skewed to basic residues over residues 104 to 116 (HKPR…KNPK) and 169 to 183 (REKK…HHKK). Over residues 186–202 (INASSAQPKSTTTTEAA) the composition is skewed to polar residues.

Its subcellular location is the nucleus. It localises to the nucleolus. The chain is Protein saf1 (saf1) from Schizosaccharomyces pombe (strain 972 / ATCC 24843) (Fission yeast).